Reading from the N-terminus, the 379-residue chain is Putative glutamate--cysteine ligase 2 (379 aa).

The protein belongs to the glutamate--cysteine ligase type 2 family. YbdK subfamily.

The enzyme catalyses L-cysteine + L-glutamate + ATP = gamma-L-glutamyl-L-cysteine + ADP + phosphate + H(+). In terms of biological role, ATP-dependent carboxylate-amine ligase which exhibits weak glutamate--cysteine ligase activity. This chain is Putative glutamate--cysteine ligase 2, found in Roseiflexus sp. (strain RS-1).